A 547-amino-acid chain; its full sequence is 2-succinyl-5-enolpyruvyl-6-hydroxy-3-cyclohexene-1-carboxylate synthase (547 aa).

This sequence belongs to the TPP enzyme family. MenD subfamily. In terms of assembly, homodimer. Mg(2+) is required as a cofactor. Mn(2+) serves as cofactor. It depends on thiamine diphosphate as a cofactor.

The enzyme catalyses isochorismate + 2-oxoglutarate + H(+) = 5-enolpyruvoyl-6-hydroxy-2-succinyl-cyclohex-3-ene-1-carboxylate + CO2. It participates in quinol/quinone metabolism; 1,4-dihydroxy-2-naphthoate biosynthesis; 1,4-dihydroxy-2-naphthoate from chorismate: step 2/7. The protein operates within quinol/quinone metabolism; menaquinone biosynthesis. Its function is as follows. Catalyzes the thiamine diphosphate-dependent decarboxylation of 2-oxoglutarate and the subsequent addition of the resulting succinic semialdehyde-thiamine pyrophosphate anion to isochorismate to yield 2-succinyl-5-enolpyruvyl-6-hydroxy-3-cyclohexene-1-carboxylate (SEPHCHC). The polypeptide is 2-succinyl-5-enolpyruvyl-6-hydroxy-3-cyclohexene-1-carboxylate synthase (Mycobacterium sp. (strain JLS)).